The primary structure comprises 171 residues: 6,7-dimethyl-8-ribityllumazine synthase (171 aa).

Residues phenylalanine 24, 58-60, and 82-84 contribute to the 5-amino-6-(D-ribitylamino)uracil site; these read ALE and AVI. A (2S)-2-hydroxy-3-oxobutyl phosphate-binding site is contributed by 87-88; sequence ET. Histidine 90 serves as the catalytic Proton donor. Asparagine 115 contacts 5-amino-6-(D-ribitylamino)uracil. Arginine 129 is a (2S)-2-hydroxy-3-oxobutyl phosphate binding site. Residues 150-171 form a disordered region; sequence ALDQLGDDEDEEEDEEDEEERA. Residues 154–171 are compositionally biased toward acidic residues; that stretch reads LGDDEDEEEDEEDEEERA.

The protein belongs to the DMRL synthase family.

The enzyme catalyses (2S)-2-hydroxy-3-oxobutyl phosphate + 5-amino-6-(D-ribitylamino)uracil = 6,7-dimethyl-8-(1-D-ribityl)lumazine + phosphate + 2 H2O + H(+). The protein operates within cofactor biosynthesis; riboflavin biosynthesis; riboflavin from 2-hydroxy-3-oxobutyl phosphate and 5-amino-6-(D-ribitylamino)uracil: step 1/2. Catalyzes the formation of 6,7-dimethyl-8-ribityllumazine by condensation of 5-amino-6-(D-ribitylamino)uracil with 3,4-dihydroxy-2-butanone 4-phosphate. This is the penultimate step in the biosynthesis of riboflavin. The protein is 6,7-dimethyl-8-ribityllumazine synthase of Burkholderia ambifaria (strain MC40-6).